Consider the following 88-residue polypeptide: N(2)-fixation sustaining protein CowN (88 aa).

This sequence belongs to the CowN family.

Functionally, is required to sustain N(2)-dependent growth in the presence of low levels of carbon monoxide (CO). Probably acts by protecting the N(2) fixation ability of the nitrogenase complex, which is inactivated in the presence of CO. This is N(2)-fixation sustaining protein CowN from Rhodomicrobium vannielii (strain ATCC 17100 / DSM 162 / LMG 4299 / NCIMB 10020 / ATH 3.1.1).